Reading from the N-terminus, the 361-residue chain is Phosphoserine aminotransferase (361 aa).

Arginine 42 is a binding site for L-glutamate. Pyridoxal 5'-phosphate-binding positions include 76-77, tryptophan 102, threonine 152, aspartate 172, and glutamine 195; that span reads AS. Lysine 196 is subject to N6-(pyridoxal phosphate)lysine. 237–238 is a pyridoxal 5'-phosphate binding site; the sequence is NT.

The protein belongs to the class-V pyridoxal-phosphate-dependent aminotransferase family. SerC subfamily. As to quaternary structure, homodimer. Pyridoxal 5'-phosphate is required as a cofactor.

It is found in the cytoplasm. The enzyme catalyses O-phospho-L-serine + 2-oxoglutarate = 3-phosphooxypyruvate + L-glutamate. The catalysed reaction is 4-(phosphooxy)-L-threonine + 2-oxoglutarate = (R)-3-hydroxy-2-oxo-4-phosphooxybutanoate + L-glutamate. The protein operates within amino-acid biosynthesis; L-serine biosynthesis; L-serine from 3-phospho-D-glycerate: step 2/3. Functionally, catalyzes the reversible conversion of 3-phosphohydroxypyruvate to phosphoserine and of 3-hydroxy-2-oxo-4-phosphonooxybutanoate to phosphohydroxythreonine. The chain is Phosphoserine aminotransferase from Halalkalibacterium halodurans (strain ATCC BAA-125 / DSM 18197 / FERM 7344 / JCM 9153 / C-125) (Bacillus halodurans).